The chain runs to 173 residues: Globin, cuticular isoform (173 aa).

Residues Met-1–Ala-16 form the signal peptide. The region spanning Met-17–Glu-166 is the Globin domain. His-113 serves as a coordination point for heme b.

It belongs to the globin family. Expressed only by adult nematodes in the gut.

The protein localises to the secreted. It localises to the extracellular space. In Nippostrongylus brasiliensis (Rat hookworm), this protein is Globin, cuticular isoform (GLBC).